The following is a 1265-amino-acid chain: Methionine synthase (1265 aa).

In terms of domain architecture, Hcy-binding spans 19–338 (RDEINAILQK…DHIREIAEAV (320 aa)). Residues Cys260, Cys323, and Cys324 each coordinate Zn(2+). Residues 371 to 632 (FVNIGERCNV…IHKELLQLCE (262 aa)) form the Pterin-binding domain. (6S)-5,6,7,8-tetrahydrofolate-binding positions include 382 to 384 (GSR), Asp449, Asn470, Asp537, Asn579, Arg585, and Arg591. Residues 662–759 (QTDEWRNGPV…FMEKEREETR (98 aa)) form the B12-binding N-terminal domain. Methylcob(III)alamin is bound by residues Glu709, 782 to 786 (GDVHD), His785, Ser830, Thr834, and Ala886. The B12-binding domain maps to 772–907 (QGTIVLATVK…DENLKDEYFE (136 aa)). The region spanning 923–1265 (SLKERRYLPL…LGPILGYDTD (343 aa)) is the AdoMet activation domain. Residues Asp974, Arg1172, and 1227–1228 (YF) contribute to the S-adenosyl-L-methionine site. Phosphothreonine is present on Thr1264.

It belongs to the vitamin-B12 dependent methionine synthase family. As to quaternary structure, monomer. Dimer. Forms a multiprotein complex with MMACHC, MMADHC and MTRR. Requires methylcob(III)alamin as cofactor. It depends on Zn(2+) as a cofactor. As to expression, widely expressed. Expressed at the highest levels in pancreas, heart, brain, skeletal muscle and placenta. Expressed at lower levels in lung, liver and kidney.

Its subcellular location is the cytoplasm. It carries out the reaction (6S)-5-methyl-5,6,7,8-tetrahydrofolate + L-homocysteine = (6S)-5,6,7,8-tetrahydrofolate + L-methionine. It functions in the pathway amino-acid biosynthesis; L-methionine biosynthesis via de novo pathway; L-methionine from L-homocysteine (MetH route): step 1/1. Its function is as follows. Catalyzes the transfer of a methyl group from methylcob(III)alamin (MeCbl) to homocysteine, yielding enzyme-bound cob(I)alamin and methionine in the cytosol. MeCbl is an active form of cobalamin (vitamin B12) used as a cofactor for methionine biosynthesis. Cob(I)alamin form is regenerated to MeCbl by a transfer of a methyl group from 5-methyltetrahydrofolate. The processing of cobalamin in the cytosol occurs in a multiprotein complex composed of at least MMACHC, MMADHC, MTRR (methionine synthase reductase) and MTR which may contribute to shuttle safely and efficiently cobalamin towards MTR in order to produce methionine. The sequence is that of Methionine synthase from Homo sapiens (Human).